The sequence spans 319 residues: tRNA uridine(34) hydroxylase (319 aa).

Residues 127–221 (KQEDTVIIDA…YGKDPEVQGE (95 aa)) form the Rhodanese domain. The active-site Cysteine persulfide intermediate is Cys181.

The protein belongs to the TrhO family.

It carries out the reaction uridine(34) in tRNA + AH2 + O2 = 5-hydroxyuridine(34) in tRNA + A + H2O. Its function is as follows. Catalyzes oxygen-dependent 5-hydroxyuridine (ho5U) modification at position 34 in tRNAs. In Bacillus mycoides (strain KBAB4) (Bacillus weihenstephanensis), this protein is tRNA uridine(34) hydroxylase.